Consider the following 420-residue polypeptide: MTLSDTIMEQLEAVRQASRNIVTLSDQNINKVLEDLAGRITSSAQAILEANRKDLEKMERSNPMYDRLLLDEKRLEGIAADMRNVASLPSPLDITLEERTLSSGLSLRKASVPIGVIGIIYEARPNVTFDVFALCLKSGNATVLKGGSDADHSNRAIAELIHTVLQDHGISPDILYLLPSEREAATIMMEAVGKIDMIIPRGSQQLIDHVRNTAKVPVIETGAGIVHTYVDRDADMEMAKAIVLNAKTRRPSVCNALDTLIIHSDRLGDLAELCRPLSEHQVIIFADKRSYLELLPSYPATLLKHAEPEHYGTEFLSLKMSVKTVDTLDEALSHIATYSSRHSEALITRDNAVKAEFFKRVDAAVVYHNASTAFTDGAQFGLGAEIGISTQKLHARGPMALKELTTYKWMIEGDGQTRPL.

The protein belongs to the gamma-glutamyl phosphate reductase family.

The protein resides in the cytoplasm. The enzyme catalyses L-glutamate 5-semialdehyde + phosphate + NADP(+) = L-glutamyl 5-phosphate + NADPH + H(+). The protein operates within amino-acid biosynthesis; L-proline biosynthesis; L-glutamate 5-semialdehyde from L-glutamate: step 2/2. Functionally, catalyzes the NADPH-dependent reduction of L-glutamate 5-phosphate into L-glutamate 5-semialdehyde and phosphate. The product spontaneously undergoes cyclization to form 1-pyrroline-5-carboxylate. This is Gamma-glutamyl phosphate reductase from Chlorobium luteolum (strain DSM 273 / BCRC 81028 / 2530) (Pelodictyon luteolum).